The primary structure comprises 345 residues: Beta-2-glycoprotein 1 (345 aa).

Residues M1 to A19 form the signal peptide. 4 consecutive Sushi domains span residues R21–P81, R82–R139, V140–E202, and V203–A262. 11 disulfides stabilise this stretch: C23–C66, C51–C79, C84–C124, C110–C137, C142–C188, C174–C200, C205–C248, C234–C260, C264–C315, C300–C325, and C307–C345. A glycan (O-linked (GalNAc...) threonine) is linked at T33. Residues N117, N162, N183, and N193 are each glycosylated (N-linked (GlcNAc...) asparagine). N253 carries an N-linked (GlcNAc...) asparagine glycan. The sushi-like stretch occupies residues S263–C345.

In terms of tissue distribution, expressed by the liver and secreted in plasma.

The protein localises to the secreted. Functionally, binds to various kinds of negatively charged substances such as heparin, phospholipids, and dextran sulfate. May prevent activation of the intrinsic blood coagulation cascade by binding to phospholipids on the surface of damaged cells. In Canis lupus familiaris (Dog), this protein is Beta-2-glycoprotein 1 (APOH).